The sequence spans 341 residues: S-adenosylmethionine:tRNA ribosyltransferase-isomerase (341 aa).

Belongs to the QueA family. Monomer.

The protein resides in the cytoplasm. It carries out the reaction 7-aminomethyl-7-carbaguanosine(34) in tRNA + S-adenosyl-L-methionine = epoxyqueuosine(34) in tRNA + adenine + L-methionine + 2 H(+). It participates in tRNA modification; tRNA-queuosine biosynthesis. Its function is as follows. Transfers and isomerizes the ribose moiety from AdoMet to the 7-aminomethyl group of 7-deazaguanine (preQ1-tRNA) to give epoxyqueuosine (oQ-tRNA). The chain is S-adenosylmethionine:tRNA ribosyltransferase-isomerase from Clostridium botulinum (strain Alaska E43 / Type E3).